The sequence spans 314 residues: Testis-specific Y-encoded protein 9 (314 aa).

This sequence belongs to the nucleosome assembly protein (NAP) family.

The protein resides in the cytoplasm. Its subcellular location is the nucleus. May be involved in sperm differentiation and proliferation. The sequence is that of Testis-specific Y-encoded protein 9 from Homo sapiens (Human).